The sequence spans 316 residues: 2,3-dihydroxyphenylpropionate/2,3-dihydroxicinnamic acid 1,2-dioxygenase (316 aa).

His115 serves as the catalytic Proton donor. Catalysis depends on His180, which acts as the Proton acceptor.

The protein belongs to the LigB/MhpB extradiol dioxygenase family. Homotetramer. Fe(2+) is required as a cofactor.

The catalysed reaction is 3-(2,3-dihydroxyphenyl)propanoate + O2 = (2Z,4E)-2-hydroxy-6-oxonona-2,4-dienedioate + H(+). It carries out the reaction (2E)-3-(2,3-dihydroxyphenyl)prop-2-enoate + O2 = (2Z,4E,7E)-2-hydroxy-6-oxonona-2,4,7-trienedioate + H(+). It functions in the pathway aromatic compound metabolism; 3-phenylpropanoate degradation. In terms of biological role, catalyzes the non-heme iron(II)-dependent oxidative cleavage of 2,3-dihydroxyphenylpropionic acid and 2,3-dihydroxicinnamic acid into 2-hydroxy-6-ketononadienedioate and 2-hydroxy-6-ketononatrienedioate, respectively. In Rhodococcus rhodochrous, this protein is 2,3-dihydroxyphenylpropionate/2,3-dihydroxicinnamic acid 1,2-dioxygenase.